The sequence spans 242 residues: DnaJ homolog subfamily B member 3 (242 aa).

One can recognise a J domain in the interval 1–69; that stretch reads MANYYEVLGV…KKRDVYDRYG (69 aa).

In terms of tissue distribution, testis specific.

In terms of biological role, may operate as a co-chaperone of the male germ cell- and haploid stage-specific Hsp70 proteins. The sequence is that of DnaJ homolog subfamily B member 3 (DNAJB3) from Macaca fuscata fuscata (Japanese macaque).